A 152-amino-acid chain; its full sequence is MAEESFYGVTLTAESDSVTWDVDEDYARGQKLVIKQILLGAEAKENEFNVVEVNTPKDSVQIPIAVLKAGETRAVNPDVEFYESKVTFKLIKGSGPVYIHGHNIKDDVEVVDMEEDDEEDDVAEDEEDEHPKKRAKIENAADGKNAKNNKKK.

Residues 109 to 128 (EVVDMEEDDEEDDVAEDEED) are compositionally biased toward acidic residues. A disordered region spans residues 109-152 (EVVDMEEDDEEDDVAEDEEDEHPKKRAKIENAADGKNAKNNKKK). Residues 136–145 (KIENAADGKN) show a composition bias toward basic and acidic residues.

It belongs to the nucleoplasmin family. Decamer formed by two pentameric rings associated in a head-to-head fashion.

Its subcellular location is the nucleus. In terms of biological role, binds to core histones and functions in the ATP-facilitated assembly of approximately regularly spaced nucleosomal arrays. May participate in parallel with other histone-binding proteins such as NAP-1. Inactive for chromatin assembly. In vitro it appears to form a high molecular mass aggregate with the core histones. This Drosophila melanogaster (Fruit fly) protein is Nucleoplasmin-like protein (Nlp).